A 314-amino-acid chain; its full sequence is MKIILANPRGFCAGVDRAISIVELALEIHGAPIYVRHEVVHNRFVVNGLRDRGAIFVEELSEVPDGAIVIFSAHGVSQAVRQEAKDRNLKVFDATCPLVTKVHMQVARASRKGTKAILIGHKGHPEVEGTMGQYSNEDGGIFLIEKVEDIARLPMQDNDDLTFMTQTTLSLDDTAETIAALKEKYPAIQGPHKNDICYATTNRQEAVRELAKLSDLVLVVGSKNSSNSNRLAELASRMGIKSQLLDDPSDIQDDWFNDVKTIGITAGASAPEELVQSIISRLKEFGADTIEELQGLEENMFFEVPKELRIKEVN.

A [4Fe-4S] cluster-binding site is contributed by C12. Residues H41 and H74 each contribute to the (2E)-4-hydroxy-3-methylbut-2-enyl diphosphate site. Residues H41 and H74 each contribute to the dimethylallyl diphosphate site. H41 and H74 together coordinate isopentenyl diphosphate. C96 contacts [4Fe-4S] cluster. (2E)-4-hydroxy-3-methylbut-2-enyl diphosphate is bound at residue H124. H124 provides a ligand contact to dimethylallyl diphosphate. Residue H124 participates in isopentenyl diphosphate binding. E126 functions as the Proton donor in the catalytic mechanism. T167 contacts (2E)-4-hydroxy-3-methylbut-2-enyl diphosphate. C197 provides a ligand contact to [4Fe-4S] cluster. S225, S226, N227, and S269 together coordinate (2E)-4-hydroxy-3-methylbut-2-enyl diphosphate. 4 residues coordinate dimethylallyl diphosphate: S225, S226, N227, and S269. Isopentenyl diphosphate-binding residues include S225, S226, N227, and S269.

This sequence belongs to the IspH family. [4Fe-4S] cluster is required as a cofactor.

The catalysed reaction is isopentenyl diphosphate + 2 oxidized [2Fe-2S]-[ferredoxin] + H2O = (2E)-4-hydroxy-3-methylbut-2-enyl diphosphate + 2 reduced [2Fe-2S]-[ferredoxin] + 2 H(+). The enzyme catalyses dimethylallyl diphosphate + 2 oxidized [2Fe-2S]-[ferredoxin] + H2O = (2E)-4-hydroxy-3-methylbut-2-enyl diphosphate + 2 reduced [2Fe-2S]-[ferredoxin] + 2 H(+). The protein operates within isoprenoid biosynthesis; dimethylallyl diphosphate biosynthesis; dimethylallyl diphosphate from (2E)-4-hydroxy-3-methylbutenyl diphosphate: step 1/1. It functions in the pathway isoprenoid biosynthesis; isopentenyl diphosphate biosynthesis via DXP pathway; isopentenyl diphosphate from 1-deoxy-D-xylulose 5-phosphate: step 6/6. Functionally, catalyzes the conversion of 1-hydroxy-2-methyl-2-(E)-butenyl 4-diphosphate (HMBPP) into a mixture of isopentenyl diphosphate (IPP) and dimethylallyl diphosphate (DMAPP). Acts in the terminal step of the DOXP/MEP pathway for isoprenoid precursor biosynthesis. This is 4-hydroxy-3-methylbut-2-enyl diphosphate reductase from Haemophilus influenzae (strain 86-028NP).